Here is a 205-residue protein sequence, read N- to C-terminus: Nucleoside triphosphate pyrophosphatase (205 aa).

Aspartate 76 (proton acceptor) is an active-site residue.

It belongs to the Maf family. Requires a divalent metal cation as cofactor.

The protein resides in the cytoplasm. The enzyme catalyses a ribonucleoside 5'-triphosphate + H2O = a ribonucleoside 5'-phosphate + diphosphate + H(+). It carries out the reaction a 2'-deoxyribonucleoside 5'-triphosphate + H2O = a 2'-deoxyribonucleoside 5'-phosphate + diphosphate + H(+). Its function is as follows. Nucleoside triphosphate pyrophosphatase. May have a dual role in cell division arrest and in preventing the incorporation of modified nucleotides into cellular nucleic acids. The chain is Nucleoside triphosphate pyrophosphatase from Orientia tsutsugamushi (strain Boryong) (Rickettsia tsutsugamushi).